The following is a 703-amino-acid chain: Ion-translocating oxidoreductase complex subunit C (703 aa).

2 4Fe-4S ferredoxin-type domains span residues Y369 to Y398 and K408 to F437. Positions 378, 381, 384, 388, 417, 420, 423, and 427 each coordinate [4Fe-4S] cluster. 2 disordered regions span residues R467–S542 and R555–A680. Over residues A485–D497 the composition is skewed to basic and acidic residues. A compositionally biased stretch (low complexity) spans N559–A577. The segment covering D578 to A592 has biased composition (polar residues). Composition is skewed to low complexity over residues A598–T629 and A641–A669.

It belongs to the 4Fe4S bacterial-type ferredoxin family. RnfC subfamily. The complex is composed of six subunits: RnfA, RnfB, RnfC, RnfD, RnfE and RnfG. It depends on [4Fe-4S] cluster as a cofactor.

It is found in the cell inner membrane. Part of a membrane-bound complex that couples electron transfer with translocation of ions across the membrane. The polypeptide is Ion-translocating oxidoreductase complex subunit C (Actinobacillus succinogenes (strain ATCC 55618 / DSM 22257 / CCUG 43843 / 130Z)).